The primary structure comprises 1034 residues: Putative beta-glucuronidase (1034 aa).

The active-site Proton donor is the glutamate 432. In terms of domain architecture, CBM6 spans valine 909–aspartate 1034.

Belongs to the glycosyl hydrolase 2 family.

The protein resides in the cytoplasm. It catalyses the reaction a beta-D-glucuronoside + H2O = D-glucuronate + an alcohol. In terms of biological role, glycoside hydrolase that may be involved in ulvan degradation. Ulvan is the main polysaccharide component of the Ulvales (green seaweed) cell wall. It is composed of disaccharide building blocks comprising 3-sulfated rhamnose (Rha3S) linked to D-glucuronic acid (GlcA), L-iduronic acid (IduA), or D-xylose (Xyl). The chain is Putative beta-glucuronidase from Formosa agariphila (strain DSM 15362 / KCTC 12365 / LMG 23005 / KMM 3901 / M-2Alg 35-1).